The primary structure comprises 368 residues: Quinolinate synthase (368 aa).

Positions 46 and 63 each coordinate iminosuccinate. C110 is a [4Fe-4S] cluster binding site. Residues 141–143 (YVN) and S162 each bind iminosuccinate. C230 provides a ligand contact to [4Fe-4S] cluster. Iminosuccinate-binding positions include 256 to 258 (HPE) and T273. C320 lines the [4Fe-4S] cluster pocket.

The protein belongs to the quinolinate synthase family. Type 3 subfamily. It depends on [4Fe-4S] cluster as a cofactor.

It is found in the cytoplasm. The enzyme catalyses iminosuccinate + dihydroxyacetone phosphate = quinolinate + phosphate + 2 H2O + H(+). The protein operates within cofactor biosynthesis; NAD(+) biosynthesis; quinolinate from iminoaspartate: step 1/1. Its function is as follows. Catalyzes the condensation of iminoaspartate with dihydroxyacetone phosphate to form quinolinate. The protein is Quinolinate synthase of Bacillus cereus (strain B4264).